The sequence spans 256 residues: MRTPIVAANWKMHKTQPEARQFLADFLPREAGMSGVEIVICPPFTALAAVAGGLTGTRVGLGAQNMSDKPSGAFTGEVSGAMLVDAGCRYVILGHSERRRLFGESDEVVGAKVRAALQHGLIPILCIGETLEEQQAGEADAVNRRQLLAGLEGLTPEQVANLVIAYEPVWAIGTGRNCDPGDAQARIAAVRAVVAEAFGPEAAARVRIQYGGSVKPENMAAYMAQPDIDGALVGGASLDPTSFAAICAAAAEARAR.

9–11 (NWK) contributes to the substrate binding site. The Electrophile role is filled by H95. E167 serves as the catalytic Proton acceptor. Substrate contacts are provided by residues G173, S213, and 234–235 (GG).

Belongs to the triosephosphate isomerase family. As to quaternary structure, homodimer.

Its subcellular location is the cytoplasm. The enzyme catalyses D-glyceraldehyde 3-phosphate = dihydroxyacetone phosphate. It functions in the pathway carbohydrate biosynthesis; gluconeogenesis. It participates in carbohydrate degradation; glycolysis; D-glyceraldehyde 3-phosphate from glycerone phosphate: step 1/1. Functionally, involved in the gluconeogenesis. Catalyzes stereospecifically the conversion of dihydroxyacetone phosphate (DHAP) to D-glyceraldehyde-3-phosphate (G3P). The chain is Triosephosphate isomerase from Symbiobacterium thermophilum (strain DSM 24528 / JCM 14929 / IAM 14863 / T).